The sequence spans 356 residues: Peptide chain release factor 1 (356 aa).

Gln-235 is modified (N5-methylglutamine).

The protein belongs to the prokaryotic/mitochondrial release factor family. In terms of processing, methylated by PrmC. Methylation increases the termination efficiency of RF1.

The protein resides in the cytoplasm. Functionally, peptide chain release factor 1 directs the termination of translation in response to the peptide chain termination codons UAG and UAA. This Hydrogenobaculum sp. (strain Y04AAS1) protein is Peptide chain release factor 1.